The chain runs to 1383 residues: DNA-directed RNA polymerase subunit beta (1383 aa).

It belongs to the RNA polymerase beta chain family. In terms of assembly, the RNAP catalytic core consists of 2 alpha, 1 beta, 1 beta' and 1 omega subunit. When a sigma factor is associated with the core the holoenzyme is formed, which can initiate transcription.

It carries out the reaction RNA(n) + a ribonucleoside 5'-triphosphate = RNA(n+1) + diphosphate. DNA-dependent RNA polymerase catalyzes the transcription of DNA into RNA using the four ribonucleoside triphosphates as substrates. This is DNA-directed RNA polymerase subunit beta from Bartonella quintana (strain Toulouse) (Rochalimaea quintana).